The chain runs to 487 residues: Glutamyl-tRNA(Gln) amidotransferase subunit A (487 aa).

Active-site charge relay system residues include lysine 77 and serine 152. Residue serine 176 is the Acyl-ester intermediate of the active site.

It belongs to the amidase family. GatA subfamily. In terms of assembly, heterotrimer of A, B and C subunits.

The enzyme catalyses L-glutamyl-tRNA(Gln) + L-glutamine + ATP + H2O = L-glutaminyl-tRNA(Gln) + L-glutamate + ADP + phosphate + H(+). Allows the formation of correctly charged Gln-tRNA(Gln) through the transamidation of misacylated Glu-tRNA(Gln) in organisms which lack glutaminyl-tRNA synthetase. The reaction takes place in the presence of glutamine and ATP through an activated gamma-phospho-Glu-tRNA(Gln). In Ligilactobacillus salivarius (strain UCC118) (Lactobacillus salivarius), this protein is Glutamyl-tRNA(Gln) amidotransferase subunit A.